The primary structure comprises 251 residues: Ubiquinone/menaquinone biosynthesis C-methyltransferase UbiE (251 aa).

Residues Thr-74, Asp-95, 123-124 (NA), and Ser-140 contribute to the S-adenosyl-L-methionine site.

Belongs to the class I-like SAM-binding methyltransferase superfamily. MenG/UbiE family.

The enzyme catalyses a 2-demethylmenaquinol + S-adenosyl-L-methionine = a menaquinol + S-adenosyl-L-homocysteine + H(+). It catalyses the reaction a 2-methoxy-6-(all-trans-polyprenyl)benzene-1,4-diol + S-adenosyl-L-methionine = a 5-methoxy-2-methyl-3-(all-trans-polyprenyl)benzene-1,4-diol + S-adenosyl-L-homocysteine + H(+). The protein operates within quinol/quinone metabolism; menaquinone biosynthesis; menaquinol from 1,4-dihydroxy-2-naphthoate: step 2/2. It functions in the pathway cofactor biosynthesis; ubiquinone biosynthesis. Functionally, methyltransferase required for the conversion of demethylmenaquinol (DMKH2) to menaquinol (MKH2) and the conversion of 2-polyprenyl-6-methoxy-1,4-benzoquinol (DDMQH2) to 2-polyprenyl-3-methyl-6-methoxy-1,4-benzoquinol (DMQH2). This chain is Ubiquinone/menaquinone biosynthesis C-methyltransferase UbiE, found in Yersinia enterocolitica serotype O:8 / biotype 1B (strain NCTC 13174 / 8081).